The chain runs to 427 residues: Methylenetetrahydrofolate--tRNA-(uracil-5-)-methyltransferase TrmFO (427 aa).

An FAD-binding site is contributed by 8 to 13 (GAGISG).

Belongs to the MnmG family. TrmFO subfamily. FAD serves as cofactor.

It localises to the cytoplasm. The catalysed reaction is uridine(54) in tRNA + (6R)-5,10-methylene-5,6,7,8-tetrahydrofolate + NADH + H(+) = 5-methyluridine(54) in tRNA + (6S)-5,6,7,8-tetrahydrofolate + NAD(+). It catalyses the reaction uridine(54) in tRNA + (6R)-5,10-methylene-5,6,7,8-tetrahydrofolate + NADPH + H(+) = 5-methyluridine(54) in tRNA + (6S)-5,6,7,8-tetrahydrofolate + NADP(+). In terms of biological role, catalyzes the folate-dependent formation of 5-methyl-uridine at position 54 (M-5-U54) in all tRNAs. This is Methylenetetrahydrofolate--tRNA-(uracil-5-)-methyltransferase TrmFO from Mycoplasmopsis agalactiae (strain NCTC 10123 / CIP 59.7 / PG2) (Mycoplasma agalactiae).